We begin with the raw amino-acid sequence, 151 residues long: Ribosome-binding factor A (151 aa).

The disordered stretch occupies residues 116-151; the sequence is DAEVARAAANARPAGDPDPYREPRPADDDDEDDEDE. Low complexity predominate over residues 120–129; sequence ARAAANARPA. The segment covering 142–151 has biased composition (acidic residues); that stretch reads DDDDEDDEDE.

Belongs to the RbfA family. In terms of assembly, monomer. Binds 30S ribosomal subunits, but not 50S ribosomal subunits or 70S ribosomes.

Its subcellular location is the cytoplasm. Functionally, one of several proteins that assist in the late maturation steps of the functional core of the 30S ribosomal subunit. Associates with free 30S ribosomal subunits (but not with 30S subunits that are part of 70S ribosomes or polysomes). Required for efficient processing of 16S rRNA. May interact with the 5'-terminal helix region of 16S rRNA. The protein is Ribosome-binding factor A of Thermobifida fusca (strain YX).